Reading from the N-terminus, the 366-residue chain is Protein-glutamate methylesterase/protein-glutamine glutaminase of group 2 operon (366 aa).

Residues 19–136 (RVLIVDDSAM…GQGLPAIMRD (118 aa)) enclose the Response regulatory domain. 4-aspartylphosphate is present on aspartate 70. The CheB-type methylesterase domain occupies 162–356 (PGASEDWIHA…ARMMLAAAAD (195 aa)). Catalysis depends on residues serine 175, histidine 201, and aspartate 298.

Belongs to the CheB family. In terms of processing, phosphorylated by CheA. Phosphorylation of the N-terminal regulatory domain activates the methylesterase activity.

The protein localises to the cytoplasm. It carries out the reaction [protein]-L-glutamate 5-O-methyl ester + H2O = L-glutamyl-[protein] + methanol + H(+). The catalysed reaction is L-glutaminyl-[protein] + H2O = L-glutamyl-[protein] + NH4(+). Involved in chemotaxis. Part of a chemotaxis signal transduction system that modulates chemotaxis in response to various stimuli. Catalyzes the demethylation of specific methylglutamate residues introduced into the chemoreceptors (methyl-accepting chemotaxis proteins or MCP) by CheR. Also mediates the irreversible deamidation of specific glutamine residues to glutamic acid. In Cereibacter sphaeroides (Rhodobacter sphaeroides), this protein is Protein-glutamate methylesterase/protein-glutamine glutaminase of group 2 operon.